The sequence spans 780 residues: Cullin-5 (780 aa).

Serine 34 is modified (phosphoserine). Threonine 210 carries the phosphothreonine modification. Positions 711-772 (RILRTQEAII…HKYIRRDESD (62 aa)) constitute a Cullin neddylation domain. Residue lysine 724 forms a Glycyl lysine isopeptide (Lys-Gly) (interchain with G-Cter in NEDD8) linkage.

Belongs to the cullin family. Component of multiple cullin-5-RING E3 ubiquitin-protein ligase complexes (ECS complexes, also named CRL5 complexes) formed of CUL5, Elongin BC (ELOB and ELOC), RNF7/RBX2 and a variable SOCS box domain-containing protein as substrate-specific recognition component. CUL5-containing ECS complexes specifically contain RNF7/RBX2, and not RBX1, as catalytic subunit. Component of the ECS(ASB2) complex with the substrate recognition component ASB2. Component of the ECS(ASB6) complex with the substrate recognition component ASB6. Component of the ECS(ASB7) complex with the substrate recognition component ASB7. Component of the ECS(ASB9) complex with the substrate recognition component ASB9. Component of the ECS(ASB11) complex with the substrate recognition component ASB11. Component of the ECS(ASB12) complex with the substrate recognition component ASB12. Component of the ECS(LRRC41) complex with the substrate recognition component LRRC41. Component of the ECS(SOCS1) complex with the substrate recognition component SOCS1. Component of the ECS(SOCS2) complex with the substrate recognition component SOCS2. Component of the ECS(WSB1) complex with the substrate recognition subunit WSB1. Component of the ECS(SOCS3) complex with the substrate recognition component SOCS3. Component of the ECS(SOCS7) complex with the substrate recognition component SOCS7. Component of the ECS(SPSB1) complex with the substrate recognition component SPSB1. Component of the ECS(SPSB3) complex with the substrate recognition component SPSB3. Component of the ECS(SPSB2) complex with the substrate recognition component SPSB2. Component of the ECS(SPSB4) complex with the substrate recognition component SPSB4. Component of the ECS(RAB40) complex with the substrate recognition subunit RAB40A, RAB40B or RAB40C. Component of the ECS(KLHDC1) complex with the substrate recognition component KLHDC1. Component of the ECS(PCMTD1) complex with the substrate recognition subunit PCMTD1. May also form complexes containing RBX1 and ELOA or VHL; additional evidence is however required to confirm this result in vivo. Interacts (when neddylated) with ARIH2; leading to activate the E3 ligase activity of ARIH2. Interacts with ERCC6; the interaction is induced by DNA damaging agents or inhibitors of RNA polymerase II elongation. Interacts with ELOA (via the BC-box). Interacts (unneddylated form) with DCUN1D1, DCUN1D2, DCUN1D3, DCUN1D4 and DCUN1D5; these interactions promote the cullin neddylation. In terms of assembly, (Microbial infection) Interacts (via the substrate recognition component) with HIV-1 Vif; forming an active cullin-5-RING E3 ubiquitin-protein ligase complex (ECS complex). As to quaternary structure, (Microbial infection) Interacts (via the substrate recognition component) with human adenovirus 5 proteins E1B-55K and E4-orf6. (Microbial infection) Interacts with herpes virus 8 protein LANA1; this interaction promotes the degradation of NF-kappa-B component RELA. In terms of assembly, (Microbial infection) Interacts with molluscum contagiosum virus protein MC132; this interaction promotes the degradation of NF-kappa-B component RELA. In terms of processing, neddylated; which enhances the ubiquitination activity of ECS complexes and prevents binding of the inhibitor CAND1. Deneddylated via its interaction with the COP9 signalosome (CSN).

The protein resides in the nucleus. It functions in the pathway protein modification; protein ubiquitination. Core component of multiple cullin-5-RING E3 ubiquitin-protein ligase complexes (ECS complexes, also named CRL5 complexes), which mediate the ubiquitination and subsequent proteasomal degradation of target proteins. Acts a scaffold protein that contributes to catalysis through positioning of the substrate and the ubiquitin-conjugating enzyme. The functional specificity of the E3 ubiquitin-protein ligase complex depends on the variable SOCS box-containing substrate recognition component. Acts as a key regulator of neuron positioning during cortex development: component of various SOCS-containing ECS complexes, such as the ECS(SOCS7) complex, that regulate reelin signaling by mediating ubiquitination and degradation of DAB1. ECS(SOCS1) seems to direct ubiquitination of JAK2. The ECS(SOCS2) complex mediates the ubiquitination and subsequent proteasomal degradation of phosphorylated EPOR and GHR. The ECS(SPSB3) complex catalyzes ubiquitination of nuclear CGAS. ECS(KLHDC1) complex is part of the DesCEND (destruction via C-end degrons) pathway and mediates ubiquitination and degradation of truncated SELENOS selenoprotein produced by failed UGA/Sec decoding, which ends with a glycine. The ECS(ASB9) complex mediates ubiquitination and degradation of CKB. As part of some ECS complex, promotes 'Lys-11'-linked ubiquitination and degradation of BTRC. As part of a multisubunit ECS complex, polyubiquitinates monoubiquitinated POLR2A. As part of the ECS(RAB40C) complex, mediates ANKRD28 ubiquitination and degradation, thereby inhibiting protein phosphatase 6 (PP6) complex activity and focal adhesion assembly during cell migration. As part of the ECS(RAB40A) complex, mediates RHOU 'Lys-48'-linked ubiquitination and degradation, thus inhibiting focal adhesion disassembly during cell migration. As part of the ECS(RAB40B) complex, mediates LIMA1/EPLIN and RAP2 ubiquitination, thereby regulating actin cytoskeleton dynamics and stress fiber formation during cell migration. May form a cell surface vasopressin receptor. Functionally, (Microbial infection) Following infection by HIV-1 virus, CUL5 associates with HIV-1 Vif proteins and forms a cullin-5-RING E3 ubiquitin-protein ligase complex (ECS complex) that catalyzes ubiquitination and degradation of APOBEC3F and APOBEC3G. The complex can also ubiquitinate APOBEC3H to some extent. Its function is as follows. (Microbial infection) Seems to be involved in proteasomal degradation of p53/TP53 stimulated by adenovirus E1B-55 kDa protein. The sequence is that of Cullin-5 from Homo sapiens (Human).